Reading from the N-terminus, the 203-residue chain is Holliday junction branch migration complex subunit RuvA (203 aa).

The domain I stretch occupies residues 1–64 (MIGRLRGIII…EDAQLLYGFN (64 aa)). The segment at 65 to 142 (NKQERTLFKE…KGLHGDLFTP (78 aa)) is domain II. Positions 143-154 (AADLVLTSPASP) are flexible linker. Positions 155 to 203 (ATNDAEQEAVAALVALGYKPQEASRMVSKIARPDASSETLIREALRAAL) are domain III.

This sequence belongs to the RuvA family. Homotetramer. Forms an RuvA(8)-RuvB(12)-Holliday junction (HJ) complex. HJ DNA is sandwiched between 2 RuvA tetramers; dsDNA enters through RuvA and exits via RuvB. An RuvB hexamer assembles on each DNA strand where it exits the tetramer. Each RuvB hexamer is contacted by two RuvA subunits (via domain III) on 2 adjacent RuvB subunits; this complex drives branch migration. In the full resolvosome a probable DNA-RuvA(4)-RuvB(12)-RuvC(2) complex forms which resolves the HJ.

The protein localises to the cytoplasm. The RuvA-RuvB-RuvC complex processes Holliday junction (HJ) DNA during genetic recombination and DNA repair, while the RuvA-RuvB complex plays an important role in the rescue of blocked DNA replication forks via replication fork reversal (RFR). RuvA specifically binds to HJ cruciform DNA, conferring on it an open structure. The RuvB hexamer acts as an ATP-dependent pump, pulling dsDNA into and through the RuvAB complex. HJ branch migration allows RuvC to scan DNA until it finds its consensus sequence, where it cleaves and resolves the cruciform DNA. The sequence is that of Holliday junction branch migration complex subunit RuvA from Escherichia coli O9:H4 (strain HS).